Reading from the N-terminus, the 90-residue chain is Large ribosomal subunit protein eL37 (90 aa).

Residues 13-46 (NKSHTLCNRCGRRSFHVQKKTCSSCGYPAAKMRS) form an A20-type zinc finger. Positions 19, 22, 34, and 37 each coordinate Zn(2+).

It belongs to the eukaryotic ribosomal protein eL37 family. As to quaternary structure, component of the large ribosomal subunit. Mature ribosomes consist of a small (40S) and a large (60S) subunit. The 40S subunit contains about 32 different proteins and 1 molecule of RNA (18S). The 60S subunit contains 45 different proteins and 3 molecules of RNA (25S, 5.8S and 5S). The cofactor is Zn(2+).

It localises to the cytoplasm. Functionally, component of the ribosome, a large ribonucleoprotein complex responsible for the synthesis of proteins in the cell. The small ribosomal subunit (SSU) binds messenger RNAs (mRNAs) and translates the encoded message by selecting cognate aminoacyl-transfer RNA (tRNA) molecules. The large subunit (LSU) contains the ribosomal catalytic site termed the peptidyl transferase center (PTC), which catalyzes the formation of peptide bonds, thereby polymerizing the amino acids delivered by tRNAs into a polypeptide chain. The nascent polypeptides leave the ribosome through a tunnel in the LSU and interact with protein factors that function in enzymatic processing, targeting, and the membrane insertion of nascent chains at the exit of the ribosomal tunnel. This is Large ribosomal subunit protein eL37 from Candida albicans (strain SC5314 / ATCC MYA-2876) (Yeast).